The chain runs to 696 residues: uncharacterized protein (696 aa).

10 helical membrane passes run 38-58 (IISI…NALA), 107-127 (LIYV…GYVV), 215-235 (AMAS…IFAL), 245-265 (SLFT…VVAL), 292-312 (TLPF…LIYL), 329-349 (VFFV…ILGE), 380-400 (FWVT…LTSA), 402-422 (FGAA…ACIG), 433-453 (FPSL…FLSS), and 457-477 (LVVA…IALP). 2 CBS domains span residues 527–587 (RSPE…PMSS) and 617–674 (IHPT…THTG).

This sequence belongs to the chloride channel (TC 2.A.49) family.

Its subcellular location is the membrane. Its function is as follows. Voltage-gated chloride channel. This is an uncharacterized protein from Schizosaccharomyces pombe (strain 972 / ATCC 24843) (Fission yeast).